We begin with the raw amino-acid sequence, 352 residues long: Homocitrate synthase, omega subunit (352 aa).

It belongs to the alpha-IPM synthase/homocitrate synthase family. As to quaternary structure, heterodimer of an alpha and an omega chain.

It carries out the reaction acetyl-CoA + 2-oxoglutarate + H2O = (2R)-homocitrate + CoA + H(+). In terms of biological role, this protein is a Fe-Mo-cofactor biosynthetic component. The polypeptide is Homocitrate synthase, omega subunit (nifV-OMEGA) (Clostridium pasteurianum).